Consider the following 337-residue polypeptide: Phenylalanine--tRNA ligase alpha subunit (337 aa).

Glutamate 258 contacts Mg(2+).

Belongs to the class-II aminoacyl-tRNA synthetase family. Phe-tRNA synthetase alpha subunit type 1 subfamily. In terms of assembly, tetramer of two alpha and two beta subunits. Mg(2+) serves as cofactor.

It localises to the cytoplasm. The enzyme catalyses tRNA(Phe) + L-phenylalanine + ATP = L-phenylalanyl-tRNA(Phe) + AMP + diphosphate + H(+). The sequence is that of Phenylalanine--tRNA ligase alpha subunit from Burkholderia cenocepacia (strain ATCC BAA-245 / DSM 16553 / LMG 16656 / NCTC 13227 / J2315 / CF5610) (Burkholderia cepacia (strain J2315)).